Here is a 56-residue protein sequence, read N- to C-terminus: Trypsin inhibitor 1 (56 aa).

The first 25 residues, Met-1–Ser-25, serve as a signal peptide directing secretion. The propeptide occupies Gly-26 to Asn-39. A cross-link (cyclopeptide (Gly-Asp)) is located at residues Gly-40–Asp-53. Cys-42 and Cys-50 form a disulfide bridge. The propeptide occupies Gly-54–Pro-56.

Post-translationally, this is a cyclic peptide.

Functionally, inhibits trypsin, cathepsin G, elastase, chymotrypsin and thrombin. Does not inhibit factor Xa. The protein is Trypsin inhibitor 1 of Helianthus annuus (Common sunflower).